The chain runs to 316 residues: Serpentine receptor class delta-48 (316 aa).

Transmembrane regions (helical) follow at residues 8 to 28, 42 to 62, 89 to 109, 127 to 147, 185 to 205, 236 to 256, and 269 to 289; these read FFYI…IFVI, FLLC…LLQL, LFYV…FITI, VVII…QIDL, FLLT…GFFI, TLQS…YFVV, and ILPV…LYSV.

The protein belongs to the nematode receptor-like protein srd family.

Its subcellular location is the membrane. This chain is Serpentine receptor class delta-48 (srd-48), found in Caenorhabditis elegans.